Reading from the N-terminus, the 1208-residue chain is Putative protease AXL1 (1208 aa).

H68 serves as a coordination point for Zn(2+). The Proton acceptor role is filled by E71. H72 and E156 together coordinate Zn(2+). S262 carries the phosphoserine modification.

The protein belongs to the peptidase M16 family. As to quaternary structure, interacts with BUD5. It depends on Zn(2+) as a cofactor.

It localises to the bud neck. Probable protease. Involved in axial budding. This is Putative protease AXL1 (AXL1) from Saccharomyces cerevisiae (strain ATCC 204508 / S288c) (Baker's yeast).